The chain runs to 468 residues: Mannan endo-1,4-beta-mannosidase 3 (468 aa).

The N-terminal stretch at 1-23 is a signal peptide; sequence MTVRPRPAAAAIIIAAVFGAAAA. Position 86 (Trp86) interacts with substrate. N-linked (GlcNAc...) asparagine glycosylation occurs at Asn152. Asn201 is a substrate binding site. Glu202 (proton donor) is an active-site residue. Tyr281 is a substrate binding site. Asn300 carries N-linked (GlcNAc...) asparagine glycosylation. The Nucleophile role is filled by Glu321. A glycan (N-linked (GlcNAc...) asparagine) is linked at Asn333. Substrate contacts are provided by Trp364 and Asp371. A disordered region spans residues 415–436; that stretch reads LRRRRRRPASSHRKTRLGSGGD. Positions 416 to 430 are enriched in basic residues; sequence RRRRRRPASSHRKTR.

Belongs to the glycosyl hydrolase 5 (cellulase A) family. In terms of tissue distribution, expressed in seeds.

It localises to the secreted. The catalysed reaction is Random hydrolysis of (1-&gt;4)-beta-D-mannosidic linkages in mannans, galactomannans and glucomannans.. The protein is Mannan endo-1,4-beta-mannosidase 3 (MAN3) of Oryza sativa subsp. japonica (Rice).